The sequence spans 469 residues: Argininosuccinate lyase (469 aa).

The protein belongs to the lyase 1 family. Argininosuccinate lyase subfamily.

Its subcellular location is the cytoplasm. The catalysed reaction is 2-(N(omega)-L-arginino)succinate = fumarate + L-arginine. It functions in the pathway amino-acid biosynthesis; L-arginine biosynthesis; L-arginine from L-ornithine and carbamoyl phosphate: step 3/3. The chain is Argininosuccinate lyase from Burkholderia lata (strain ATCC 17760 / DSM 23089 / LMG 22485 / NCIMB 9086 / R18194 / 383).